The following is a 232-amino-acid chain: Phosphatidylserine decarboxylase proenzyme (232 aa).

Catalysis depends on serine 190, which acts as the Schiff-base intermediate with substrate; via pyruvic acid. Serine 190 carries the pyruvic acid (Ser); by autocatalysis modification.

The protein belongs to the phosphatidylserine decarboxylase family. PSD-A subfamily. In terms of assembly, heterodimer of a large membrane-associated beta subunit and a small pyruvoyl-containing alpha subunit. Pyruvate serves as cofactor. Is synthesized initially as an inactive proenzyme. Formation of the active enzyme involves a self-maturation process in which the active site pyruvoyl group is generated from an internal serine residue via an autocatalytic post-translational modification. Two non-identical subunits are generated from the proenzyme in this reaction, and the pyruvate is formed at the N-terminus of the alpha chain, which is derived from the carboxyl end of the proenzyme. The post-translation cleavage follows an unusual pathway, termed non-hydrolytic serinolysis, in which the side chain hydroxyl group of the serine supplies its oxygen atom to form the C-terminus of the beta chain, while the remainder of the serine residue undergoes an oxidative deamination to produce ammonia and the pyruvoyl prosthetic group on the alpha chain.

It is found in the cell membrane. It carries out the reaction a 1,2-diacyl-sn-glycero-3-phospho-L-serine + H(+) = a 1,2-diacyl-sn-glycero-3-phosphoethanolamine + CO2. It functions in the pathway phospholipid metabolism; phosphatidylethanolamine biosynthesis; phosphatidylethanolamine from CDP-diacylglycerol: step 2/2. Its function is as follows. Catalyzes the formation of phosphatidylethanolamine (PtdEtn) from phosphatidylserine (PtdSer). The protein is Phosphatidylserine decarboxylase proenzyme of Cereibacter sphaeroides (strain ATCC 17023 / DSM 158 / JCM 6121 / CCUG 31486 / LMG 2827 / NBRC 12203 / NCIMB 8253 / ATH 2.4.1.) (Rhodobacter sphaeroides).